The following is a 153-amino-acid chain: Transcriptional repressor NrdR (153 aa).

A zinc finger lies at 3–34 (CPYCNADDTKVIDSRLAAEGAQVRRRRQCNQC). Residues 49-139 (PRIIKSNGRI…VYRDFQDIEA (91 aa)) enclose the ATP-cone domain.

The protein belongs to the NrdR family. The cofactor is Zn(2+).

Its function is as follows. Negatively regulates transcription of bacterial ribonucleotide reductase nrd genes and operons by binding to NrdR-boxes. The chain is Transcriptional repressor NrdR from Psychrobacter sp. (strain PRwf-1).